Consider the following 419-residue polypeptide: UDP-N-acetylglucosamine 1-carboxyvinyltransferase 2 (419 aa).

22–23 (KN) provides a ligand contact to phosphoenolpyruvate. Arginine 92 contributes to the UDP-N-acetyl-alpha-D-glucosamine binding site. Residue cysteine 116 is the Proton donor of the active site. 2-(S-cysteinyl)pyruvic acid O-phosphothioketal is present on cysteine 116. UDP-N-acetyl-alpha-D-glucosamine contacts are provided by residues 121–125 (RPIDL), aspartate 306, and isoleucine 328.

The protein belongs to the EPSP synthase family. MurA subfamily.

It is found in the cytoplasm. It carries out the reaction phosphoenolpyruvate + UDP-N-acetyl-alpha-D-glucosamine = UDP-N-acetyl-3-O-(1-carboxyvinyl)-alpha-D-glucosamine + phosphate. Its pathway is cell wall biogenesis; peptidoglycan biosynthesis. Cell wall formation. Adds enolpyruvyl to UDP-N-acetylglucosamine. This is UDP-N-acetylglucosamine 1-carboxyvinyltransferase 2 from Streptococcus pyogenes serotype M18 (strain MGAS8232).